The chain runs to 427 residues: G2/mitotic-specific cyclin-3 (427 aa).

Polar residues predominate over residues 1–12; sequence MHHNSQSLSSGH. 2 disordered regions span residues 1–29 and 89–126; these read MHHN…NLKH and SVAQ…EDQE. The segment covering 89–105 has biased composition (basic and acidic residues); that stretch reads SVAQRKEADHNDLLTDR. Over residues 106–126 the composition is skewed to acidic residues; the sequence is EQEEPVEDDGESEEDEEEDQE.

The protein belongs to the cyclin family. Cyclin AB subfamily.

Essential for the control of the cell cycle at the G2/M (mitosis) transition. Interacts with the CDC2 protein kinase to form MPF. G2/M cyclins accumulate steadily during G2 and are abruptly destroyed at mitosis. The protein is G2/mitotic-specific cyclin-3 (CLB3) of Saccharomyces cerevisiae (strain ATCC 204508 / S288c) (Baker's yeast).